The primary structure comprises 160 residues: Epithelial membrane protein 1 (160 aa).

Residues 1-21 (MLVLLAAIFVVHIATCVMLFV) traverse the membrane as a helical segment. N-linked (GlcNAc...) asparagine glycosylation is found at N35 and N43. 3 consecutive transmembrane segments (helical) span residues 67-87 (FMIL…FQLF), 95-115 (FFLS…GASI), and 137-157 (FILA…YLVL).

It belongs to the PMP-22/EMP/MP20 family. As to expression, most abundant in squamous epithelia.

It is found in the membrane. The chain is Epithelial membrane protein 1 (EMP1) from Oryctolagus cuniculus (Rabbit).